A 70-amino-acid polypeptide reads, in one-letter code: UPF0434 protein MCA0634 (70 aa).

Belongs to the UPF0434 family.

In Methylococcus capsulatus (strain ATCC 33009 / NCIMB 11132 / Bath), this protein is UPF0434 protein MCA0634.